The primary structure comprises 128 residues: Lymphocyte antigen 6D (128 aa).

An N-terminal signal peptide occupies residues 1 to 20 (MKTVLLFLVALAAAAGPAQA). The UPAR/Ly6 domain occupies 21 to 108 (LRCHVCTSSS…WQSAAPARTS (88 aa)). 5 disulfide bridges follow: cysteine 23–cysteine 45, cysteine 26–cysteine 32, cysteine 38–cysteine 63, cysteine 67–cysteine 86, and cysteine 87–cysteine 92. Serine 98 is lipidated: GPI-anchor amidated serine. Positions 99–128 (WQSAAPARTSAHLGLALACGLLALLWAPGL) are cleaved as a propeptide — removed in mature form.

The protein localises to the cell membrane. May act as a specification marker at earliest stage specification of lymphocytes between B- and T-cell development. Marks the earliest stage of B-cell specification. This is Lymphocyte antigen 6D (LY6D) from Bos taurus (Bovine).